We begin with the raw amino-acid sequence, 355 residues long: tRNA-specific 2-thiouridylase MnmA (355 aa).

ATP-binding positions include 6 to 13 (LLSGGVDS) and L33. The active-site Nucleophile is C100. Residues C100 and C195 are joined by a disulfide bond. ATP is bound at residue G123. The interaction with tRNA stretch occupies residues 145-147 (KDQ). The active-site Cysteine persulfide intermediate is C195.

This sequence belongs to the MnmA/TRMU family.

It localises to the cytoplasm. The catalysed reaction is S-sulfanyl-L-cysteinyl-[protein] + uridine(34) in tRNA + AH2 + ATP = 2-thiouridine(34) in tRNA + L-cysteinyl-[protein] + A + AMP + diphosphate + H(+). Catalyzes the 2-thiolation of uridine at the wobble position (U34) of tRNA, leading to the formation of s(2)U34. The polypeptide is tRNA-specific 2-thiouridylase MnmA (Borreliella burgdorferi (strain ATCC 35210 / DSM 4680 / CIP 102532 / B31) (Borrelia burgdorferi)).